The chain runs to 101 residues: NAD(P)H-quinone oxidoreductase subunit 4L, chloroplastic (101 aa).

The next 3 helical transmembrane spans lie at 2-22, 32-52, and 61-81; these read MLEHVLVLSSYLLSIGIYGLI, MCLELILNAVNINFVTFSDLF, and IFSIFVIGIAAAEAAIGLAII.

This sequence belongs to the complex I subunit 4L family. In terms of assembly, NDH is composed of at least 16 different subunits, 5 of which are encoded in the nucleus.

Its subcellular location is the plastid. The protein localises to the chloroplast thylakoid membrane. It catalyses the reaction a plastoquinone + NADH + (n+1) H(+)(in) = a plastoquinol + NAD(+) + n H(+)(out). The catalysed reaction is a plastoquinone + NADPH + (n+1) H(+)(in) = a plastoquinol + NADP(+) + n H(+)(out). Functionally, NDH shuttles electrons from NAD(P)H:plastoquinone, via FMN and iron-sulfur (Fe-S) centers, to quinones in the photosynthetic chain and possibly in a chloroplast respiratory chain. The immediate electron acceptor for the enzyme in this species is believed to be plastoquinone. Couples the redox reaction to proton translocation, and thus conserves the redox energy in a proton gradient. This is NAD(P)H-quinone oxidoreductase subunit 4L, chloroplastic from Ranunculus macranthus (Large buttercup).